The primary structure comprises 395 residues: THP3 homolog C2A9.11c (395 aa).

The tract at residues Leu91–Pro127 is disordered. The PCI domain maps to Asp218–Lys384.

It belongs to the THP3 family.

It is found in the cytoplasm. The protein resides in the nucleus. Functionally, required for transcription elongation. May also be involved in pre-mRNA splicing. The sequence is that of THP3 homolog C2A9.11c from Schizosaccharomyces pombe (strain 972 / ATCC 24843) (Fission yeast).